Reading from the N-terminus, the 236-residue chain is MRQHVNPLSRFFQLPRPLPSPEEMFAQSSRPLHLDIGCARGGFLLSLAPLQPEWNHVGVEIRHPLVLSAERDRQELELDNLRFLFCNVNVSLEEWLDALPRDQLQWVSIQFPDPWFKRRHQKRRVLQPSLLIALATALQPGRELFIQSDVLSVIEPMVMLIEQSNCFERPKNDSHAWQKANPLPVPTERERYVLDQGLQVYRRLYQRNDQQAPELSNLEALWQQVDNPSKEEHSDC.

Asp-35, Glu-60, Asn-87, and Asp-113 together coordinate S-adenosyl-L-methionine. Asp-113 is an active-site residue. Lys-117 and Asp-149 together coordinate substrate.

The protein belongs to the class I-like SAM-binding methyltransferase superfamily. TrmB family.

The enzyme catalyses guanosine(46) in tRNA + S-adenosyl-L-methionine = N(7)-methylguanosine(46) in tRNA + S-adenosyl-L-homocysteine. Its pathway is tRNA modification; N(7)-methylguanine-tRNA biosynthesis. Its function is as follows. Catalyzes the formation of N(7)-methylguanine at position 46 (m7G46) in tRNA. The polypeptide is tRNA (guanine-N(7)-)-methyltransferase (Prochlorococcus marinus (strain MIT 9313)).